Consider the following 324-residue polypeptide: Fructose-1,6-bisphosphatase class 1 (324 aa).

The Mg(2+) site is built by E88, D107, L109, and D110. Substrate-binding positions include 110–113 (DGSS), N199, and K265. E271 is a binding site for Mg(2+).

It belongs to the FBPase class 1 family. As to quaternary structure, homotetramer. Mg(2+) serves as cofactor.

It localises to the cytoplasm. The enzyme catalyses beta-D-fructose 1,6-bisphosphate + H2O = beta-D-fructose 6-phosphate + phosphate. The protein operates within carbohydrate biosynthesis; gluconeogenesis. This is Fructose-1,6-bisphosphatase class 1 from Neisseria gonorrhoeae (strain ATCC 700825 / FA 1090).